The following is a 469-amino-acid chain: Programmed cell death protein 4 (469 aa).

An N-acetylmethionine modification is found at methionine 1. 2 disordered regions span residues 1-38 (MDVE…EIKN) and 58-128 (KAKR…GTPG). Serine 25 bears the Phosphoserine mark. Residues 58–64 (KAKRRLR) carry the Nuclear localization signal motif. Phosphoserine; by PKB and RPS6KB1 is present on serine 67. A phosphoserine mark is found at serine 68, serine 71, serine 76, serine 78, serine 80, and serine 94. Residues 70–76 (DSGRGDS) carry the Phosphodegron motif. The span at 74-83 (GDSVSDSGSD) shows a compositional bias: low complexity. A compositionally biased stretch (gly residues) spans 114 to 125 (KKGGAGGKGVWG). Phosphotyrosine is present on tyrosine 152. An MI 1 domain is found at 163 to 284 (AFEKTLTPII…CNTYIDSYKG (122 aa)). The Nuclear localization signal signature appears at 241–250 (DKLLKDLPEL). Serine 313 and serine 317 each carry phosphoserine. The region spanning 326-449 (HLVKEIDMLL…SKQLRDLCPS (124 aa)) is the MI 2 domain. Serine 457 carries the phosphoserine; by PKB modification.

It belongs to the PDCD4 family. Interacts (via MI domains) with EIF4A2. Interacts (via MI domains) with EIF4A1 (via N-terminal domain). Heterotrimer with EIF4A1; one molecule of PDCD4 binds two molecules of EIF4A1. Interacts with EIF4G1. May form a complex with EIF4A1 and EIF4G1. The interaction between PDCD4 and EIF4A1 interferes with the interaction between EIF4A1 and EIF4G. When phosphorylated, interacts with BTRC and FBXW11. Post-translationally, polyubiquitinated, leading to its proteasomal degradation. Rapidly degraded in response to mitogens. Phosphorylation of the phosphodegron promotes interaction with BTRC and proteasomal degradation. In terms of processing, phosphorylated at Ser-67 by RPS6KB1 in response to mitogens; phosphorylation promotes proteasomal degradation of PDCD4. Up-regulated in proliferative cells. Highly expressed in epithelial cells of the mammary gland. Reduced expression in lung cancer and colon carcinoma.

It is found in the nucleus. Its subcellular location is the cytoplasm. Functionally, inhibits translation initiation and cap-dependent translation. May excert its function by hindering the interaction between EIF4A1 and EIF4G. Inhibits the helicase activity of EIF4A. Modulates the activation of JUN kinase. Down-regulates the expression of MAP4K1, thus inhibiting events important in driving invasion, namely, MAPK85 activation and consequent JUN-dependent transcription. May play a role in apoptosis. Tumor suppressor. Inhibits tumor promoter-induced neoplastic transformation. Binds RNA. The polypeptide is Programmed cell death protein 4 (PDCD4) (Homo sapiens (Human)).